The following is a 494-amino-acid chain: MLNDKQSVENIPRILISADRSSSGKTTISMGLMAALVSRGYKVQPFKVALDYIDPSYHTEITGRFCRNLDGYLMDENGILDVYTHACEAGEKADIAIIEGVRGLYEGFESLSDLGSTAQIAKILNCPVIFVINARSITRSSAALINGYRNFDPDVEIAGVILNNIGSRRHAKKAKEAIEYYTGVPVIGIVPRDPAMQISMRHLGLMPALEGRRRLGDGGFEARLRGIEEIINKGIDVDRFMEIAKSAKALKSPENSVFSSVSDPGAPRPKIGVALDEAFNFYYRDNIDLLNLAGAEIVYFSPVKDASLPEVDGLYIGGGYPELFAAELEANESMRQDIKKASAAGMPIYAECGGLMYLTEKISTGVPGKGTYHDASMPESTYSMVGALPGHTIMGQTRVVSYNIGTLNKDCLLGKKYNSFKGHEFHHSEIREIPEDAEFAITLSRGTGIKNGMDGLISGNTLGSYAHLHGVAYREFASSLVEAARNFRDSRVLP.

One can recognise a GATase cobBQ-type domain in the interval 270 to 475; that stretch reads KIGVALDEAF…AHLHGVAYRE (206 aa). Residue cysteine 352 is the Nucleophile of the active site.

The protein belongs to the CobB/CbiA family. The cofactor is Mg(2+).

The catalysed reaction is cob(II)yrinate + 2 L-glutamine + 2 ATP + 2 H2O = cob(II)yrinate a,c diamide + 2 L-glutamate + 2 ADP + 2 phosphate + 2 H(+). It carries out the reaction Ni-sirohydrochlorin + 2 L-glutamine + 2 ATP + 2 H2O = Ni-sirohydrochlorin a,c-diamide + 2 L-glutamate + 2 ADP + 2 phosphate + 2 H(+). It functions in the pathway cofactor biosynthesis; adenosylcobalamin biosynthesis; cob(II)yrinate a,c-diamide from sirohydrochlorin (anaerobic route): step 10/10. In terms of biological role, catalyzes the ATP-dependent amidation of the two carboxylate groups at positions a and c of cobyrinate, using either L-glutamine or ammonia as the nitrogen source (Potential). Involved in the biosynthesis of the unique nickel-containing tetrapyrrole coenzyme F430, the prosthetic group of methyl-coenzyme M reductase (MCR), which plays a key role in methanogenesis and anaerobic methane oxidation. Catalyzes the ATP-dependent amidation of the two carboxylate groups at positions a and c of Ni-sirohydrochlorin, using L-glutamine or ammonia as the nitrogen source. Also able to use sirohydrochlorin as substrate, but only produces a monoamide species in a much slower reaction. Unable to use other metallosirohydrochlorins such as sirohaem and Co-sirohydrochlorin. The chain is Cobyrinate a,c-diamide synthase from Methanosarcina barkeri (strain Fusaro / DSM 804).